Consider the following 95-residue polypeptide: Small ribosomal subunit protein bS18 (95 aa).

Belongs to the bacterial ribosomal protein bS18 family. As to quaternary structure, part of the 30S ribosomal subunit. Forms a tight heterodimer with protein bS6.

Binds as a heterodimer with protein bS6 to the central domain of the 16S rRNA, where it helps stabilize the platform of the 30S subunit. This is Small ribosomal subunit protein bS18 from Rickettsia peacockii (strain Rustic).